A 489-amino-acid polypeptide reads, in one-letter code: Putative L,D-transpeptidase HI_1667 (489 aa).

Residues 10 to 29 (LSLFALSLSMMMSGCVLVGL) form a helical membrane-spanning segment. A L,D-TPase catalytic domain is found at 254 to 433 (NGIFVNIPSY…ETRKNTVLAS (180 aa)). Histidine 384 serves as the catalytic Proton donor/acceptor. Cysteine 403 (nucleophile) is an active-site residue.

The protein belongs to the YkuD family.

It localises to the membrane. It functions in the pathway cell wall biogenesis; peptidoglycan biosynthesis. The chain is Putative L,D-transpeptidase HI_1667 from Haemophilus influenzae (strain ATCC 51907 / DSM 11121 / KW20 / Rd).